We begin with the raw amino-acid sequence, 553 residues long: Arginine--tRNA ligase (553 aa).

The 'HIGH' region signature appears at 130 to 140 (ANPTGDLHIGH).

This sequence belongs to the class-I aminoacyl-tRNA synthetase family. In terms of assembly, monomer.

The protein resides in the cytoplasm. It catalyses the reaction tRNA(Arg) + L-arginine + ATP = L-arginyl-tRNA(Arg) + AMP + diphosphate. The chain is Arginine--tRNA ligase from Staphylococcus epidermidis (strain ATCC 35984 / DSM 28319 / BCRC 17069 / CCUG 31568 / BM 3577 / RP62A).